The following is a 249-amino-acid chain: Coproheme decarboxylase (249 aa).

Fe-coproporphyrin III-binding positions include Arg-131, 145-149, His-172, Gln-185, and Ser-223; that span reads YPMNK. Residue Tyr-145 is part of the active site.

This sequence belongs to the ChdC family. Type 1 subfamily. The cofactor is Fe-coproporphyrin III.

It catalyses the reaction Fe-coproporphyrin III + 2 H2O2 + 2 H(+) = heme b + 2 CO2 + 4 H2O. The enzyme catalyses Fe-coproporphyrin III + H2O2 + H(+) = harderoheme III + CO2 + 2 H2O. The catalysed reaction is harderoheme III + H2O2 + H(+) = heme b + CO2 + 2 H2O. Its pathway is porphyrin-containing compound metabolism; protoheme biosynthesis. Its function is as follows. Involved in coproporphyrin-dependent heme b biosynthesis. Catalyzes the decarboxylation of Fe-coproporphyrin III (coproheme) to heme b (protoheme IX), the last step of the pathway. The reaction occurs in a stepwise manner with a three-propionate intermediate. This is Coproheme decarboxylase from Thermus thermophilus (strain ATCC BAA-163 / DSM 7039 / HB27).